A 116-amino-acid polypeptide reads, in one-letter code: Large ribosomal subunit protein uL22 (116 aa).

It belongs to the universal ribosomal protein uL22 family. In terms of assembly, part of the 50S ribosomal subunit.

This protein binds specifically to 23S rRNA; its binding is stimulated by other ribosomal proteins, e.g. L4, L17, and L20. It is important during the early stages of 50S assembly. It makes multiple contacts with different domains of the 23S rRNA in the assembled 50S subunit and ribosome. In terms of biological role, the globular domain of the protein is located near the polypeptide exit tunnel on the outside of the subunit, while an extended beta-hairpin is found that lines the wall of the exit tunnel in the center of the 70S ribosome. In Leptospira biflexa serovar Patoc (strain Patoc 1 / Ames), this protein is Large ribosomal subunit protein uL22.